Reading from the N-terminus, the 200-residue chain is Imidazoleglycerol-phosphate dehydratase (200 aa).

Belongs to the imidazoleglycerol-phosphate dehydratase family.

It is found in the cytoplasm. It carries out the reaction D-erythro-1-(imidazol-4-yl)glycerol 3-phosphate = 3-(imidazol-4-yl)-2-oxopropyl phosphate + H2O. It functions in the pathway amino-acid biosynthesis; L-histidine biosynthesis; L-histidine from 5-phospho-alpha-D-ribose 1-diphosphate: step 6/9. In Chlorobium phaeovibrioides (strain DSM 265 / 1930) (Prosthecochloris vibrioformis (strain DSM 265)), this protein is Imidazoleglycerol-phosphate dehydratase.